The following is a 361-amino-acid chain: Rho-GTPase-activating protein 5 (361 aa).

A Rho-GAP domain is found at 52 to 245 (IFLTRRDGEK…FLINHQGSFI (194 aa)). Residues 306-323 (SSATYSNSPSSNFSNMKS) are compositionally biased toward low complexity. The segment at 306–345 (SSATYSNSPSSNFSNMKSSEVDPGSPPRIKSRSYSLSRSS) is disordered.

It localises to the membrane. In terms of biological role, GTPase-activating protein for Rho1. Has a role in the negative regulation of (1-3)beta-D-glucan synthase activity and cell integrity. This chain is Rho-GTPase-activating protein 5 (rga5), found in Schizosaccharomyces pombe (strain 972 / ATCC 24843) (Fission yeast).